A 397-amino-acid chain; its full sequence is Enoyl-[acyl-carrier-protein] reductase [NADH] (397 aa).

Residues 48-53 (GASTGY), 74-75 (FE), 111-112 (DA), and 139-140 (LA) contribute to the NAD(+) site. Tyr-225 contributes to the substrate binding site. Tyr-235 functions as the Proton donor in the catalytic mechanism. NAD(+) contacts are provided by residues Lys-244 and 273–275 (VVT).

This sequence belongs to the TER reductase family. Monomer.

It catalyses the reaction a 2,3-saturated acyl-[ACP] + NAD(+) = a (2E)-enoyl-[ACP] + NADH + H(+). It participates in lipid metabolism; fatty acid biosynthesis. Involved in the final reduction of the elongation cycle of fatty acid synthesis (FAS II). Catalyzes the reduction of a carbon-carbon double bond in an enoyl moiety that is covalently linked to an acyl carrier protein (ACP). The protein is Enoyl-[acyl-carrier-protein] reductase [NADH] of Pseudoalteromonas translucida (strain TAC 125).